A 248-amino-acid polypeptide reads, in one-letter code: Probable phosphatase VPA0505 (248 aa).

9 residues coordinate Zn(2+): histidine 8, histidine 10, histidine 16, histidine 41, glutamate 74, histidine 102, histidine 132, aspartate 194, and histidine 196.

Belongs to the PHP family. It depends on Zn(2+) as a cofactor.

The chain is Probable phosphatase VPA0505 from Vibrio parahaemolyticus serotype O3:K6 (strain RIMD 2210633).